The chain runs to 202 residues: Cytochrome c oxidase assembly protein CtaG (202 aa).

The Cytoplasmic segment spans residues 1-14 (MTSPANPSEVTRDR). The helical; Signal-anchor for type II membrane protein transmembrane segment at 15-37 (RNRGVAFVCAGVFVAMVGMSFAA) threads the bilayer. Residues 38-202 (VPLYRLFCQV…GAAKTQKLGG (165 aa)) are Periplasmic-facing.

It belongs to the COX11/CtaG family.

It is found in the cell inner membrane. Its function is as follows. Exerts its effect at some terminal stage of cytochrome c oxidase synthesis, probably by being involved in the insertion of the copper B into subunit I. The chain is Cytochrome c oxidase assembly protein CtaG from Chelativorans sp. (strain BNC1).